A 205-amino-acid polypeptide reads, in one-letter code: Holliday junction branch migration complex subunit RuvA (205 aa).

A domain I region spans residues M1–K62. The tract at residues T63–L141 is domain II. Residues F142–K152 form a flexible linker region. Residues G153 to R205 form a domain III region.

It belongs to the RuvA family. Homotetramer. Forms an RuvA(8)-RuvB(12)-Holliday junction (HJ) complex. HJ DNA is sandwiched between 2 RuvA tetramers; dsDNA enters through RuvA and exits via RuvB. An RuvB hexamer assembles on each DNA strand where it exits the tetramer. Each RuvB hexamer is contacted by two RuvA subunits (via domain III) on 2 adjacent RuvB subunits; this complex drives branch migration. In the full resolvosome a probable DNA-RuvA(4)-RuvB(12)-RuvC(2) complex forms which resolves the HJ.

The protein resides in the cytoplasm. The RuvA-RuvB-RuvC complex processes Holliday junction (HJ) DNA during genetic recombination and DNA repair, while the RuvA-RuvB complex plays an important role in the rescue of blocked DNA replication forks via replication fork reversal (RFR). RuvA specifically binds to HJ cruciform DNA, conferring on it an open structure. The RuvB hexamer acts as an ATP-dependent pump, pulling dsDNA into and through the RuvAB complex. HJ branch migration allows RuvC to scan DNA until it finds its consensus sequence, where it cleaves and resolves the cruciform DNA. This is Holliday junction branch migration complex subunit RuvA from Bacillus cytotoxicus (strain DSM 22905 / CIP 110041 / 391-98 / NVH 391-98).